Reading from the N-terminus, the 133-residue chain is Small ribosomal subunit protein uS9 (133 aa).

The segment covering 95 to 113 (GDSKQELKSRGFLTRDPRK) has biased composition (basic and acidic residues). The tract at residues 95-133 (GDSKQELKSRGFLTRDPRKKERKKYGHKKARKSFQFSKR) is disordered. Residues 114–133 (KERKKYGHKKARKSFQFSKR) show a composition bias toward basic residues.

This sequence belongs to the universal ribosomal protein uS9 family.

The sequence is that of Small ribosomal subunit protein uS9 from Chlamydia felis (strain Fe/C-56) (Chlamydophila felis).